The primary structure comprises 369 residues: Protein arginine N-methyltransferase 1-A (369 aa).

The region spanning 48–369 is the SAM-dependent MTase PRMT-type domain; that stretch reads KDYYFDSYAH…LSCSTDYRMR (322 aa). 5 residues coordinate S-adenosyl-L-methionine: H61, R70, G94, E116, and E145. Catalysis depends on residues E160 and E169.

The protein belongs to the class I-like SAM-binding methyltransferase superfamily. Protein arginine N-methyltransferase family. As to quaternary structure, homodimer. Homooctamer; individual homodimers associates to form a homooctamer and homooligomerization is required for proper localization to the cell membrane. Individual homodimers can associate to form a homohexamer. Component of a complex with lsm14a/rap55a. Interacts with cirbp.

It is found in the nucleus. Its subcellular location is the nucleoplasm. It localises to the cytoplasm. The protein localises to the cytosol. It carries out the reaction L-arginyl-[protein] + 2 S-adenosyl-L-methionine = N(omega),N(omega)-dimethyl-L-arginyl-[protein] + 2 S-adenosyl-L-homocysteine + 2 H(+). The enzyme catalyses L-arginyl-[protein] + S-adenosyl-L-methionine = N(omega)-methyl-L-arginyl-[protein] + S-adenosyl-L-homocysteine + H(+). It catalyses the reaction N(omega)-methyl-L-arginyl-[protein] + S-adenosyl-L-methionine = N(omega),N(omega)-dimethyl-L-arginyl-[protein] + S-adenosyl-L-homocysteine + H(+). In terms of biological role, arginine methyltransferase that methylates (mono and asymmetric dimethylation) the guanidino nitrogens of arginyl residues present in target proteins. Constitutes the main enzyme that mediates monomethylation and asymmetric dimethylation of histone H4 'Arg-4' (H4R3me1 and H4R3me2a, respectively), a specific tag for epigenetic transcriptional activation. Methylates cirbp to regulate its subcellular location. Acts transiently during metamorphosis as a transcription coactivator, enhancing thyroid hormone (T3) receptor (TR)-mediated transcription by enhancing TR binding to the T3 response element (TRE), and histone modification through recruitment of other coactivators. This Xenopus laevis (African clawed frog) protein is Protein arginine N-methyltransferase 1-A (prmt1-a).